A 311-amino-acid chain; its full sequence is Pyrimidine-specific ribonucleoside hydrolase RihA (311 aa).

The active site involves His-240.

It belongs to the IUNH family. RihA subfamily.

In terms of biological role, hydrolyzes with equal efficiency cytidine or uridine to ribose and cytosine or uracil, respectively. In Escherichia coli O45:K1 (strain S88 / ExPEC), this protein is Pyrimidine-specific ribonucleoside hydrolase RihA.